Consider the following 280-residue polypeptide: Beta-glucosyl-HMC-alpha-glucosyl-transferase (280 aa).

It functions in the pathway genetic information processing; DNA modification. Transfers a gentiobiosyl-group on a hydroxymethylcytosine residue in DNA. Is involved in a DNA modification process to protects the phage genome against its own nucleases and the host restriction endonuclease system. This is Beta-glucosyl-HMC-alpha-glucosyl-transferase from Enterobacteria phage T2 (Bacteriophage T2).